The following is a 653-amino-acid chain: Large subunit GTPase 1 homolog (653 aa).

The disordered stretch occupies residues 1–31; that stretch reads MGRRRAPAGGSLGRALMRHQTQRSRSHRHTD. The segment covering 16-28 has biased composition (basic residues); that stretch reads LMRHQTQRSRSHR. A phosphoserine mark is found at serine 93 and serine 97. The CP-type G domain maps to 164–445; the sequence is WRQLWRVIER…LCDCPGLVMP (282 aa). Residue 212 to 215 coordinates GTP; sequence NKAD. A disordered region spans residues 251-358; the sequence is DSEEEANKDD…RKTPQKRQLH (108 aa). The residue at position 252 (serine 252) is a Phosphoserine. Residues 258 to 288 are compositionally biased toward basic and acidic residues; the sequence is KDDRQSNTAEFEHSSFDEAEISHSETEHLPA. A compositionally biased stretch (acidic residues) spans 299–333; it reads TTDEDDSEYEDCPEEEEDDWQTCSEEDGPEEEDCG. GTP is bound by residues 394–401 and 438–441; these read GYPNVGKS and DCPG. The disordered stretch occupies residues 630–653; sequence SENGAGKPWKKHGNRNKKEKSCRL. A compositionally biased stretch (basic residues) spans 637-647; that stretch reads PWKKHGNRNKK.

It belongs to the TRAFAC class YlqF/YawG GTPase family. LSG1 subfamily.

It localises to the cytoplasm. It is found in the endoplasmic reticulum. The protein resides in the nucleus. Its subcellular location is the cajal body. The catalysed reaction is GTP + H2O = GDP + phosphate + H(+). Its function is as follows. Functions as a GTPase. May act by mediating the release of NMD3 from the 60S ribosomal subunit after export into the cytoplasm during the 60S ribosomal subunit maturation. The polypeptide is Large subunit GTPase 1 homolog (Macaca fascicularis (Crab-eating macaque)).